A 312-amino-acid chain; its full sequence is Malate dehydrogenase (312 aa).

NAD(+) contacts are provided by residues Gly10–Gly15 and Asp34. Arg85 and Arg91 together coordinate substrate. Residues Asn98 and Leu121–Asn123 contribute to the NAD(+) site. Substrate contacts are provided by Asn123 and Arg154. The active-site Proton acceptor is His178.

It belongs to the LDH/MDH superfamily. MDH type 3 family.

The enzyme catalyses (S)-malate + NAD(+) = oxaloacetate + NADH + H(+). Functionally, catalyzes the reversible oxidation of malate to oxaloacetate. This Staphylococcus saprophyticus subsp. saprophyticus (strain ATCC 15305 / DSM 20229 / NCIMB 8711 / NCTC 7292 / S-41) protein is Malate dehydrogenase.